A 248-amino-acid polypeptide reads, in one-letter code: tRNA (guanine-N(1)-)-methyltransferase (248 aa).

Residues Gly-113 and 133 to 138 (IGDYVL) each bind S-adenosyl-L-methionine.

This sequence belongs to the RNA methyltransferase TrmD family. In terms of assembly, homodimer.

It is found in the cytoplasm. The enzyme catalyses guanosine(37) in tRNA + S-adenosyl-L-methionine = N(1)-methylguanosine(37) in tRNA + S-adenosyl-L-homocysteine + H(+). Its function is as follows. Specifically methylates guanosine-37 in various tRNAs. The chain is tRNA (guanine-N(1)-)-methyltransferase from Shewanella woodyi (strain ATCC 51908 / MS32).